The following is an 875-amino-acid chain: Ectonucleotide pyrophosphatase/phosphodiesterase family member 3 (875 aa).

Topologically, residues 1–11 are cytoplasmic; it reads MDSRLALATEE. The chain crosses the membrane as a helical; Signal-anchor for type II membrane protein span at residues 12-30; it reads PIKKDSLKRYKILCAVLLA. Residues 31–875 lie on the Extracellular side of the membrane; the sequence is LLVIVSLGLG…TYLPTFETII (845 aa). SMB domains follow at residues 51–94 and 95–139; these read HIGS…VKST and QIWT…GEVP. Disulfide bonds link cysteine 55/cysteine 72, cysteine 59/cysteine 90, cysteine 70/cysteine 83, cysteine 76/cysteine 82, cysteine 99/cysteine 116, cysteine 104/cysteine 134, cysteine 114/cysteine 127, cysteine 120/cysteine 126, cysteine 145/cysteine 191, and cysteine 153/cysteine 365. A Cell attachment site motif is present at residues 79 to 81; the sequence is RGD. The phosphodiesterase stretch occupies residues 161-545; that stretch reads PVILFSMDGF…HGSLNHLLKA (385 aa). Aspartate 168 is a binding site for Zn(2+). Lysine 205 provides a ligand contact to ATP. Threonine 206 contributes to the Zn(2+) binding site. Threonine 206 (nucleophile) is an active-site residue. Position 227 (asparagine 227) interacts with ATP. N-linked (GlcNAc...) asparagine glycosylation occurs at asparagine 237. Aspartate 276 serves as a coordination point for ATP. Asparagine 280 and asparagine 289 each carry an N-linked (GlcNAc...) asparagine glycan. Tyrosine 290 serves as a coordination point for ATP. Residues aspartate 326, histidine 330, aspartate 373, and histidine 374 each coordinate Zn(2+). 6 cysteine pairs are disulfide-bonded: cysteine 381-cysteine 478, cysteine 429-cysteine 818, cysteine 562-cysteine 623, cysteine 575-cysteine 679, cysteine 577-cysteine 664, and cysteine 787-cysteine 797. Histidine 483 provides a ligand contact to Zn(2+). N-linked (GlcNAc...) asparagine glycosylation is found at asparagine 533, asparagine 574, asparagine 594, and asparagine 702. The interval 582–875 is nuclease; it reads TSGQEEQVNQ…TYLPTFETII (294 aa). Ca(2+) contacts are provided by aspartate 752, asparagine 754, aspartate 756, histidine 758, and aspartate 760. N-linked (GlcNAc...) asparagine glycosylation is present at asparagine 789.

It belongs to the nucleotide pyrophosphatase/phosphodiesterase family. As to quaternary structure, monomer and homodimer. Zn(2+) serves as cofactor. Post-translationally, the N-terminal is blocked. N-glycosylated. N-glycosylation is necessary for normal transport to the cell membrane, but is not the apical targeting signal. As to expression, detected in intestinal epithelium and liver (at protein level).

Its subcellular location is the cell membrane. The protein localises to the apical cell membrane. The protein resides in the secreted. The enzyme catalyses Hydrolytically removes 5'-nucleotides successively from the 3'-hydroxy termini of 3'-hydroxy-terminated oligonucleotides.. The catalysed reaction is a ribonucleoside 5'-triphosphate + H2O = a ribonucleoside 5'-phosphate + diphosphate + H(+). It catalyses the reaction ATP + H2O = AMP + diphosphate + H(+). It carries out the reaction CTP + H2O = CMP + diphosphate + H(+). The enzyme catalyses GTP + H2O = GMP + diphosphate + H(+). The catalysed reaction is UTP + H2O = UMP + diphosphate + H(+). It catalyses the reaction UDP-N-acetyl-alpha-D-glucosamine + H2O = N-acetyl-alpha-D-glucosamine 1-phosphate + UMP + 2 H(+). It carries out the reaction P(1),P(3)-bis(5'-adenosyl) triphosphate + H2O = AMP + ADP + 2 H(+). The enzyme catalyses P(1),P(4)-bis(5'-adenosyl) tetraphosphate + H2O = AMP + ATP + 2 H(+). The catalysed reaction is P(1),P(5)-bis(5'-adenosyl) pentaphosphate + H2O = adenosine 5'-tetraphosphate + AMP + 2 H(+). It catalyses the reaction P(1),P(4)-bis(5'-guanosyl) tetraphosphate + H2O = GMP + GTP + 2 H(+). Its function is as follows. Hydrolase that metabolizes extracellular nucleotides, including ATP, GTP, UTP and CTP. Limits mast cells and basophils response during inflammation and during the chronic phases of allergic responses by eliminating extracellular ATP, a signaling molecule activating these cells in an autocrine manner. Metabolizes extracellular ATP in the lumen of the small intestine, and thereby prevents ATP-induced apoptosis of intestinal plasmacytoid dendritic cells. Has a broad specificity and can also hydrolyze UDP-GlcNAc into UMP and GlcNAc-1-phosphate and potentially several other intracellular nucleotide sugars, including UDP-GalNAc, CMP-NeuAc, GDP-Fuc, and UDP-GlcA. Thereby, could modulate glycan biosynthesis and protein glycosylation. Can hydrolyze extracellular dinucleoside polyphosphates, including the vasoactive adenosine polyphosphates as well. In addition, displays an alkaline phosphodiesterase activity in vitro. The chain is Ectonucleotide pyrophosphatase/phosphodiesterase family member 3 from Rattus norvegicus (Rat).